A 344-amino-acid chain; its full sequence is L-rhamnose-proton symporter (344 aa).

The next 10 helical transmembrane spans lie at 4–24 (PILLGIFWHFIGAASAACFYA), 38–58 (WSLGGFFSWIILPWSISWWLL), 68–88 (FDMATLLPIFLFGAMWGIGNI), 101–121 (MGIGIAIGVTLIIGTLMTPVL), 137–157 (TLLGVLVAVIGVAIVSYAGLL), 175–195 (LILAVMCGIFSAGMSFAMDAA), 214–234 (LPSYVVIMGGGAIVNLGFCFI), 255–275 (LIANALFAILGGVMWYLQFFF), 290–310 (ISWMLHMSFYVLCGGIVGLLF), and 324–344 (LVLGCVVIILAANIVGLGMAV).

The protein belongs to the L-rhamnose transporter (TC 2.A.7.6) family.

The protein localises to the cell inner membrane. It catalyses the reaction L-rhamnopyranose(in) + H(+)(in) = L-rhamnopyranose(out) + H(+)(out). Functionally, uptake of L-rhamnose across the cytoplasmic membrane with the concomitant transport of protons into the cell (symport system). The protein is L-rhamnose-proton symporter of Pectobacterium atrosepticum (strain SCRI 1043 / ATCC BAA-672) (Erwinia carotovora subsp. atroseptica).